A 523-amino-acid polypeptide reads, in one-letter code: Frizzled-2 (523 aa).

The region spanning 1–120 is the FZ domain; the sequence is PDHGFCQPIS…HGAEQICVGQ (120 aa). The Extracellular segment spans residues 1 to 205; the sequence is PDHGFCQPIS…EDEIRFARVW (205 aa). Cystine bridges form between Cys-6–Cys-67, Cys-14–Cys-60, Cys-51–Cys-88, Cys-77–Cys-117, and Cys-81–Cys-105. A glycan (N-linked (GlcNAc...) asparagine) is linked at Asn-20. N-linked (GlcNAc...) asparagine glycosylation occurs at Asn-121. Residues 206-226 traverse the membrane as a helical segment; it reads ILVWSVLCCASTFFTVTTYLV. At 227-237 the chain is on the cytoplasmic side; it reads DMQRFRYPERP. The helical transmembrane segment at 238–258 threads the bilayer; the sequence is IIFLSGCYTMVSVAYIAGFVL. At 259–285 the chain is on the extracellular side; it reads EERVVCNERFQEDGYRTVVQGTKKEGC. Residues 286–306 traverse the membrane as a helical segment; it reads TILFMMLYFFSMASSIWWVIL. Residues 307–328 are Cytoplasmic-facing; sequence SLTWFLAAGMKWGHEAIEANSQ. A helical membrane pass occupies residues 329–349; that stretch reads YFHLAAWAVPAVKTITILAMG. Residues 350–372 lie on the Extracellular side of the membrane; it reads QIDGDLLSGVCFVGLNGIDPLRG. A helical transmembrane segment spans residues 373-393; sequence FVLAPLFVYLFIGTSFLLAGF. The Cytoplasmic segment spans residues 394-419; that stretch reads VSLFRIRTIMKHGGTKTEKLERLMVR. A helical membrane pass occupies residues 420-440; sequence IGVFSVLYTVPATIVIACYFY. Residues 441–477 are Extracellular-facing; sequence EQAFRQHWERSWISQHCKSLAIPCPLHFTPRMTPDFT. The helical transmembrane segment at 478–498 threads the bilayer; it reads VYMIKYLMTLIVGITSGFWIF. Topologically, residues 499–523 are cytoplasmic; it reads SGKTLHSWRKFYTRLTNSRQGETTV. The Lys-Thr-X-X-X-Trp motif, mediates interaction with the PDZ domain of Dvl family members signature appears at 501–506; that stretch reads KTLHSW. Positions 521–523 match the PDZ-binding motif; that stretch reads TTV.

This sequence belongs to the G-protein coupled receptor Fz/Smo family. Expressed in the developing head and limbs. Expressed broadly in cranial ectoderm. Also expressed in the developing somites (dermomyotome) and in other cranial placodes, including the olfactory, lens, and otic placodes (rostral rim of the vesicle).

Its subcellular location is the membrane. The protein localises to the cell membrane. Functionally, receptor for Wnt proteins. Most of frizzled receptors are coupled to the beta-catenin canonical signaling pathway, which leads to the activation of disheveled proteins, inhibition of GSK-3 kinase, nuclear accumulation of beta-catenin and activation of Wnt target genes. A second signaling pathway involving PKC and calcium fluxes has been seen for some family members, but it is not yet clear if it represents a distinct pathway or if it can be integrated in the canonical pathway, as PKC seems to be required for Wnt-mediated inactivation of GSK-3 kinase. Both pathways seem to involve interactions with G-proteins. May be involved in transduction and intercellular transmission of polarity information during tissue morphogenesis and/or in differentiated tissues. The protein is Frizzled-2 (FZD2) of Gallus gallus (Chicken).